Reading from the N-terminus, the 69-residue chain is Large ribosomal subunit protein uL29 (69 aa).

The protein belongs to the universal ribosomal protein uL29 family.

The chain is Large ribosomal subunit protein uL29 from Rhodopseudomonas palustris (strain BisB5).